Consider the following 197-residue polypeptide: Gastrula zinc finger protein XlCGF17.1 (197 aa).

C2H2-type zinc fingers lie at residues 6-28, 34-56, 62-84, 90-112, 118-140, 146-169, and 175-197; these read ISCSECGKCFIKSSELTVHQMTH, YSCSECGKCFASLSHLRVHQKIH, FSCSECGKCFLNRGSLVRHHRTH, FFCSECGKRFAASSDLRVHRRTH, FSCSECEKRFLNPWSLVRHYRTH, FSCSECGKCFARSSDLTVHRRRSH, and FSCSECGKCFTSSSELTVHLRTH.

It belongs to the krueppel C2H2-type zinc-finger protein family.

It localises to the nucleus. May be involved in transcriptional regulation. The chain is Gastrula zinc finger protein XlCGF17.1 from Xenopus laevis (African clawed frog).